The sequence spans 860 residues: Leucine--tRNA ligase (860 aa).

The 'HIGH' region motif lies at 42 to 52 (PYPSGRLHMGH). A 'KMSKS' region motif is present at residues 619-623 (KMSKS). An ATP-binding site is contributed by lysine 622.

This sequence belongs to the class-I aminoacyl-tRNA synthetase family.

The protein resides in the cytoplasm. It carries out the reaction tRNA(Leu) + L-leucine + ATP = L-leucyl-tRNA(Leu) + AMP + diphosphate. The chain is Leucine--tRNA ligase from Shigella sonnei (strain Ss046).